Reading from the N-terminus, the 565-residue chain is Protein unc-87 (565 aa).

Positions methionine 1–serine 27 are enriched in low complexity. 2 disordered regions span residues methionine 1–serine 83 and isoleucine 237–asparagine 262. The span at glutamate 54–asparagine 69 shows a compositional bias: basic and acidic residues. 3 Calponin-like repeats span residues isoleucine 237 to asparagine 262, valine 285 to cysteine 310, and valine 338 to threonine 363. A compositionally biased stretch (polar residues) spans lysine 250–asparagine 262. Basic and acidic residues predominate over residues serine 369–glutamine 381. The disordered stretch occupies residues serine 369–threonine 400. A compositionally biased stretch (polar residues) spans isoleucine 384 to glycine 398. 4 Calponin-like repeats span residues isoleucine 384–threonine 409, isoleucine 431–valine 456, valine 472–threonine 497, and isoleucine 517–lysine 542.

It belongs to the calponin family. In terms of assembly, monomer. Interacts with F-actin. Interacts with myosin. Expressed in the body wall muscles. Isoform a: Expression in the pharynx, anal depressor muscle, uterine muscle, vulva and unidentified neurons in the head and the ventral region. Isoform b: Expression in the body wall muscles, spermatheca, vulva and in the myoepithelial sheath.

It is found in the cytoplasm. The protein localises to the myofibril. The protein resides in the sarcomere. Its subcellular location is the i band. Thin filament-associated protein that is implicated in actin bundling and actin filament dynamics. Exhibits F-actin cross-linking activity. Required for the maintenance of sarcomeric actin organization in striated muscles. Competes with unc-60 isoform b for actin binding and protects actin filaments from depolymerization by unc-60, thereby contributing to actin filament stability. Cooperates with myosin to form actomyosin bundles and inhibits actomyosin ATPase activity and actomyosin motility. Might protect the myofilaments from mechanical stress. Its function is as follows. Acts as a negative regulator of myosin-dependent contractility of smooth muscle-like cells in the somatic gonad. In Caenorhabditis elegans, this protein is Protein unc-87 (unc-87).